The sequence spans 705 residues: Polyribonucleotide nucleotidyltransferase (705 aa).

D492 and D498 together coordinate Mg(2+). The 60-residue stretch at 559–618 folds into the KH domain; sequence PLMITMKVSPDKIRHIIGPGGKIINKIIDETGVEIDIDDDGSVYILAQDQESGNRAKEII. The 69-residue stretch at 628 to 696 folds into the S1 motif domain; it reads GDIYEGRVKK…ELGRINLSRK (69 aa).

This sequence belongs to the polyribonucleotide nucleotidyltransferase family. Mg(2+) serves as cofactor.

The protein resides in the cytoplasm. It carries out the reaction RNA(n+1) + phosphate = RNA(n) + a ribonucleoside 5'-diphosphate. Functionally, involved in mRNA degradation. Catalyzes the phosphorolysis of single-stranded polyribonucleotides processively in the 3'- to 5'-direction. The protein is Polyribonucleotide nucleotidyltransferase of Halothermothrix orenii (strain H 168 / OCM 544 / DSM 9562).